Consider the following 222-residue polypeptide: L-serine dehydratase, beta chain (222 aa).

In terms of domain architecture, ACT spans 150 to 222; it reads TILLEYPEQR…RFTTAKYVEV (73 aa).

The protein belongs to the iron-sulfur dependent L-serine dehydratase family. As to quaternary structure, heterooctamer of four alpha chains and four beta chains. [4Fe-4S] cluster is required as a cofactor.

It catalyses the reaction L-serine = pyruvate + NH4(+). The protein operates within carbohydrate biosynthesis; gluconeogenesis. This chain is L-serine dehydratase, beta chain (sdhB), found in Peptoniphilus asaccharolyticus (Peptostreptococcus asaccharolyticus).